Here is a 156-residue protein sequence, read N- to C-terminus: Small ribosomal subunit protein uS7 (156 aa).

The protein belongs to the universal ribosomal protein uS7 family. As to quaternary structure, part of the 30S ribosomal subunit. Contacts proteins S9 and S11.

Its function is as follows. One of the primary rRNA binding proteins, it binds directly to 16S rRNA where it nucleates assembly of the head domain of the 30S subunit. Is located at the subunit interface close to the decoding center, probably blocks exit of the E-site tRNA. This Thermodesulfovibrio yellowstonii (strain ATCC 51303 / DSM 11347 / YP87) protein is Small ribosomal subunit protein uS7.